The primary structure comprises 465 residues: Phosphomannomutase/phosphoglucomutase (465 aa).

The active-site Phosphoserine intermediate is serine 110. Positions 110, 244, 246, and 248 each coordinate Mg(2+). Residues glutamate 327, serine 329, and histidine 331 each contribute to the substrate site.

Belongs to the phosphohexose mutase family. In terms of assembly, monomer. Requires Mg(2+) as cofactor.

The catalysed reaction is alpha-D-mannose 1-phosphate = D-mannose 6-phosphate. The enzyme catalyses alpha-D-glucose 1-phosphate = alpha-D-glucose 6-phosphate. Its pathway is nucleotide-sugar biosynthesis; GDP-alpha-D-mannose biosynthesis; alpha-D-mannose 1-phosphate from D-fructose 6-phosphate: step 2/2. It functions in the pathway bacterial outer membrane biogenesis; lipopolysaccharide biosynthesis. The phosphomannomutase activity produces a precursor for alginate polymerization. The alginate layer causes a mucoid phenotype and provides a protective barrier against host immune defenses and antibiotics. Also involved in core-LPS biosynthesis due to its phosphoglucomutase activity. Essential for biofilm production. This Pseudomonas syringae pv. tomato (strain ATCC BAA-871 / DC3000) protein is Phosphomannomutase/phosphoglucomutase (algC).